The following is a 270-amino-acid chain: 5'-nucleotidase SurE (270 aa).

A divalent metal cation contacts are provided by Asp14, Asp15, Ser46, and Asn104.

Belongs to the SurE nucleotidase family. Requires a divalent metal cation as cofactor.

The protein resides in the cytoplasm. The catalysed reaction is a ribonucleoside 5'-phosphate + H2O = a ribonucleoside + phosphate. Nucleotidase that shows phosphatase activity on nucleoside 5'-monophosphates. This Microcystis aeruginosa (strain NIES-843 / IAM M-2473) protein is 5'-nucleotidase SurE.